Reading from the N-terminus, the 140-residue chain is Large ribosomal subunit protein uL14 (140 aa).

Serine 17 carries the phosphoserine modification. At tyrosine 38 the chain carries Phosphotyrosine.

This sequence belongs to the universal ribosomal protein uL14 family. In terms of assembly, component of the large ribosomal subunit.

The protein localises to the cytoplasm. Component of the large ribosomal subunit. The ribosome is a large ribonucleoprotein complex responsible for the synthesis of proteins in the cell. The polypeptide is Large ribosomal subunit protein uL14 (RPL23) (Pongo abelii (Sumatran orangutan)).